The primary structure comprises 320 residues: Aspartate carbamoyltransferase catalytic subunit (320 aa).

The carbamoyl phosphate site is built by Arg68 and Thr69. Lys96 serves as a coordination point for L-aspartate. Arg118, His148, and Gln151 together coordinate carbamoyl phosphate. The L-aspartate site is built by Arg181 and Arg236. Residues Gly277 and Pro278 each contribute to the carbamoyl phosphate site.

It belongs to the aspartate/ornithine carbamoyltransferase superfamily. ATCase family. As to quaternary structure, heterododecamer (2C3:3R2) of six catalytic PyrB chains organized as two trimers (C3), and six regulatory PyrI chains organized as three dimers (R2).

The enzyme catalyses carbamoyl phosphate + L-aspartate = N-carbamoyl-L-aspartate + phosphate + H(+). It functions in the pathway pyrimidine metabolism; UMP biosynthesis via de novo pathway; (S)-dihydroorotate from bicarbonate: step 2/3. Functionally, catalyzes the condensation of carbamoyl phosphate and aspartate to form carbamoyl aspartate and inorganic phosphate, the committed step in the de novo pyrimidine nucleotide biosynthesis pathway. In Polaromonas naphthalenivorans (strain CJ2), this protein is Aspartate carbamoyltransferase catalytic subunit.